Reading from the N-terminus, the 338-residue chain is Anthranilate phosphoribosyltransferase (338 aa).

5-phospho-alpha-D-ribose 1-diphosphate is bound by residues Gly81, 84–85, Ser89, 91–94, 109–117, and Ala121; these read GD, NVST, and KHGNRALSS. Gly81 serves as a coordination point for anthranilate. Ser93 contributes to the Mg(2+) binding site. Residue Asn112 coordinates anthranilate. Residue Arg167 coordinates anthranilate. Residues Asp226 and Glu227 each coordinate Mg(2+).

The protein belongs to the anthranilate phosphoribosyltransferase family. As to quaternary structure, homodimer. The cofactor is Mg(2+).

It catalyses the reaction N-(5-phospho-beta-D-ribosyl)anthranilate + diphosphate = 5-phospho-alpha-D-ribose 1-diphosphate + anthranilate. It functions in the pathway amino-acid biosynthesis; L-tryptophan biosynthesis; L-tryptophan from chorismate: step 2/5. Its function is as follows. Catalyzes the transfer of the phosphoribosyl group of 5-phosphorylribose-1-pyrophosphate (PRPP) to anthranilate to yield N-(5'-phosphoribosyl)-anthranilate (PRA). The protein is Anthranilate phosphoribosyltransferase of Rhodopseudomonas palustris (strain TIE-1).